The following is an 82-amino-acid chain: Turripeptide IX-23 (82 aa).

The N-terminal stretch at 1-23 (MMAKLMITVMMVLLLSLQQGADG) is a signal peptide. Residues 24-50 (RSERWRKNQMAASSIMRNLITARIDPP) constitute a propeptide that is removed on maturation. 3 cysteine pairs are disulfide-bonded: Cys53-Cys68, Cys58-Cys72, and Cys64-Cys79.

It belongs to the Pg turripeptide superfamily. In terms of tissue distribution, expressed by the venom duct.

It is found in the secreted. The sequence is that of Turripeptide IX-23 from Gemmula speciosa (Splendid gem-turris).